The following is a 505-amino-acid chain: Probable alpha-L-arabinofuranosidase C (505 aa).

4 N-linked (GlcNAc...) asparagine glycosylation sites follow: Asn-81, Asn-152, Asn-269, and Asn-438.

Belongs to the glycosyl hydrolase 51 family.

The protein resides in the secreted. The catalysed reaction is Hydrolysis of terminal non-reducing alpha-L-arabinofuranoside residues in alpha-L-arabinosides.. Its pathway is glycan metabolism; L-arabinan degradation. Alpha-L-arabinofuranosidase involved in the degradation of arabinoxylan, a major component of plant hemicellulose. Acts only on small linear 1,5-alpha-linked L-arabinofuranosyl oligosaccharides. This is Probable alpha-L-arabinofuranosidase C (abfC) from Aspergillus fumigatus (strain ATCC MYA-4609 / CBS 101355 / FGSC A1100 / Af293) (Neosartorya fumigata).